A 421-amino-acid polypeptide reads, in one-letter code: Histidine--tRNA ligase (421 aa).

The protein belongs to the class-II aminoacyl-tRNA synthetase family. As to quaternary structure, homodimer.

The protein localises to the cytoplasm. The enzyme catalyses tRNA(His) + L-histidine + ATP = L-histidyl-tRNA(His) + AMP + diphosphate + H(+). The polypeptide is Histidine--tRNA ligase (Francisella tularensis subsp. holarctica (strain OSU18)).